The sequence spans 539 residues: CTP synthase (539 aa).

The amidoligase domain stretch occupies residues 1–268 (MSFKSIFLTG…SDFLLNKLGF (268 aa)). Ser14 provides a ligand contact to CTP. Ser14 is a UTP binding site. An ATP-binding site is contributed by 15 to 20 (SLGKGL). L-glutamine is bound at residue Tyr55. An ATP-binding site is contributed by Asp72. Residues Asp72 and Glu142 each contribute to the Mg(2+) site. Residues 149–151 (DIE), 188–193 (KTKPTQ), and Lys224 each bind CTP. UTP-binding positions include 188–193 (KTKPTQ) and Lys224. Leu242 provides a ligand contact to ATP. A Glutamine amidotransferase type-1 domain is found at 294 to 532 (RIGLVGKYLE…IRAAKAYSLE (239 aa)). Gly353 serves as a coordination point for L-glutamine. Catalysis depends on Cys380, which acts as the Nucleophile; for glutamine hydrolysis. L-glutamine is bound by residues 381 to 384 (LGMQ), Glu404, and Arg460. Residues His505 and Glu507 contribute to the active site.

Belongs to the CTP synthase family. Homotetramer.

It catalyses the reaction UTP + L-glutamine + ATP + H2O = CTP + L-glutamate + ADP + phosphate + 2 H(+). The enzyme catalyses L-glutamine + H2O = L-glutamate + NH4(+). It carries out the reaction UTP + NH4(+) + ATP = CTP + ADP + phosphate + 2 H(+). The protein operates within pyrimidine metabolism; CTP biosynthesis via de novo pathway; CTP from UDP: step 2/2. With respect to regulation, allosterically activated by GTP, when glutamine is the substrate; GTP has no effect on the reaction when ammonia is the substrate. The allosteric effector GTP functions by stabilizing the protein conformation that binds the tetrahedral intermediate(s) formed during glutamine hydrolysis. Inhibited by the product CTP, via allosteric rather than competitive inhibition. Catalyzes the ATP-dependent amination of UTP to CTP with either L-glutamine or ammonia as the source of nitrogen. May be involved in lipopolysaccharide biosynthesis, potentially channelling CTP directly to CMP-KDO synthetase. Regulates intracellular CTP levels through interactions with the four ribonucleotide triphosphates. The chain is CTP synthase from Chlamydia trachomatis serovar D (strain ATCC VR-885 / DSM 19411 / UW-3/Cx).